A 571-amino-acid chain; its full sequence is Serine/threonine-protein kinase Nek7 (571 aa).

The Protein kinase domain maps to 19 to 277 (YHVVEQVRRG…LRNPSLQPYL (259 aa)). ATP contacts are provided by residues 25 to 33 (VRRGKSSSD) and Lys48. Asp144 functions as the Proton acceptor in the catalytic mechanism. Disordered stretches follow at residues 298–321 (SPKD…SREK) and 338–363 (TETG…ETKR). Residues 312–321 (FGKERVSREK) are compositionally biased toward basic and acidic residues. Residues 342–351 (SSSSSQPASS) are compositionally biased toward low complexity.

The protein belongs to the protein kinase superfamily. NEK Ser/Thr protein kinase family. NIMA subfamily.

The catalysed reaction is L-seryl-[protein] + ATP = O-phospho-L-seryl-[protein] + ADP + H(+). The enzyme catalyses L-threonyl-[protein] + ATP = O-phospho-L-threonyl-[protein] + ADP + H(+). Functionally, may be involved in plant development processes. The protein is Serine/threonine-protein kinase Nek7 (NEK7) of Arabidopsis thaliana (Mouse-ear cress).